The primary structure comprises 445 residues: Sterile alpha motif domain-containing protein 7 (445 aa).

The tract at residues 98-172 is required for localization to nuclear polycomb bodies; the sequence is HAARAEMEMY…HLQGNPILLA (75 aa). A disordered region spans residues 193 to 282; sequence YQKPPESDTE…WDDGKGKPSE (90 aa). The segment covering 227–244 has biased composition (basic and acidic residues); sequence IKDPDIEVDNQQKPRVAD. An SAM domain is found at 324–378; it reads WTVDDVYNFIRSLPGCSDYAQVFKDHAIDGETLPLLTEQHLRGTMGLKLGPALKI. Positions 425-445 are disordered; that stretch reads SIPGPQDLLSPKRTEQDVMRN. Over residues 434–445 the composition is skewed to basic and acidic residues; it reads SPKRTEQDVMRN.

In terms of assembly, monomer, homodimer and homooligomer. Component of a Polycomb group (PcG) multiprotein PRC1-like complex. Interacts with PHC2 and NR2E3. Interacts with RNF1 in a PHC2-dependent manner. Interacts with SAMD11. In terms of tissue distribution, expressed in the retina and the pineal gland. In the retina, it is predominantly expressed in the outer nuclear layer and developing rod photoreceptors.

The protein resides in the nucleus. The protein localises to the cytoplasm. In terms of biological role, component of a Polycomb group (PcG) multiprotein PRC1-like complex, essential for establishing rod photoreceptor cell identity and function by silencing nonrod gene expression in developing rod photoreceptor cells. Via its association with the PRC1-like complex, promotes epigenetic repressive marks H3K27me3 and H2AK119ub marks in nonrod genes, silencing their transcription. Represses Crx-controlled photoreceptor-specific gene expression. This is Sterile alpha motif domain-containing protein 7 (Samd7) from Mus musculus (Mouse).